The chain runs to 534 residues: Low affinity inorganic phosphate transporter 1 (534 aa).

The Cytoplasmic portion of the chain corresponds to 1 to 23 (MAKDLQVLTALDVAKTQLYHFTA). The chain crosses the membrane as a helical span at residues 24–44 (IVIAGMGFFTDAYDLFCISLV). Over 45 to 69 (TKLLGRIYYHHEGALKPGSLPPNVA) the chain is Extracellular. The helical transmembrane segment at 70–90 (AAVNGVAFCGTLAGQLFFGWL) threads the bilayer. Residues 91 to 98 (GDKLGRKK) are Cytoplasmic-facing. A helical transmembrane segment spans residues 99–119 (VYGMTLMLMVICSIASGLSFG). Over 120–124 (HTPKS) the chain is Extracellular. Residues 125–145 (VMATLCFFRFWLGFGIGGDYP) form a helical membrane-spanning segment. The Cytoplasmic portion of the chain corresponds to 146–163 (LSATIMSEYANKKTRGAF). Residues 164 to 184 (IAAVFAMQGFGILAGGMVAII) form a helical membrane-spanning segment. At 185-210 (VSAAFKNQFPAPAYKDGALASTISQA) the chain is on the extracellular side. A helical transmembrane segment spans residues 211–231 (DFVWRIIVMFGAIPTALTYYW). Residues 232-290 (RMKMPETARYTALVAKNLKQATNDMSKVLQVEIEPEQEKVEEISQGNDFGLFTKQFLRR) lie on the Cytoplasmic side of the membrane. Residues 291 to 311 (HGLHLLGTASTWFLLDIAFYS) form a helical membrane-spanning segment. Topologically, residues 312 to 343 (QNLFQKDIFSAIGWIPPAETMNALEEVYRIAR) are extracellular. The helical transmembrane segment at 344-364 (AQTLIALCSTVPGYWFTVAFI) threads the bilayer. The Cytoplasmic portion of the chain corresponds to 365–369 (DKIGR). Residues 370-390 (FAIQLMGFFFMTVFMFALAIP) form a helical membrane-spanning segment. Over 391–400 (YTHWTHKDNR) the chain is Extracellular. Residues 401–421 (IGFVIMYSLTFFFANFGPNAT) traverse the membrane as a helical segment. The Cytoplasmic portion of the chain corresponds to 422 to 440 (TFVVPAEIFPARLRSTCHG). A helical membrane pass occupies residues 441 to 461 (ISAAAGKAGAMVGAFGFLYAA). The Extracellular portion of the chain corresponds to 462-481 (QSTDPKKTDAGYPAGIGVRN). A helical transmembrane segment spans residues 482–502 (SLIVLGCVNFLGMLFTLLVPE). The Cytoplasmic portion of the chain corresponds to 503–534 (SKGKSLEEMSRENEGEDENGTEMRASGRTVPV). The segment at 507 to 534 (SLEEMSRENEGEDENGTEMRASGRTVPV) is disordered.

The protein belongs to the major facilitator superfamily. Phosphate:H(+) symporter (TC 2.A.1.9) family.

The protein resides in the cell membrane. It catalyses the reaction phosphate(in) + H(+)(in) = phosphate(out) + H(+)(out). In terms of biological role, low-affinity transporter for external inorganic phosphate (Pi). Involved in phosphorus (P) remobilization from dying to developing tissues during corolla senescence in an ethylene-dependent manner. The sequence is that of Low affinity inorganic phosphate transporter 1 from Petunia hybrida (Petunia).